An 870-amino-acid chain; its full sequence is MOG interacting and ectopic P-granules protein 1 (870 aa).

The disordered stretch occupies residues 1 to 244; it reads MVTADETVLA…VPEEDNNEQA (244 aa). A compositionally biased stretch (polar residues) spans 9–20; it reads LATTTNTTSMSV. The segment covering 41–51 has biased composition (basic and acidic residues); that stretch reads EQLKAEQREVM. Composition is skewed to acidic residues over residues 77–99, 129–142, and 203–214; these read EVIE…DENG, IEQD…EITE, and IELDDDDDDEIQ. 2 C2H2-type zinc fingers span residues 421–444 and 450–473; these read HRCD…ENLH and FQCT…FETH. The segment at 486–508 adopts a CCHC-type zinc-finger fold; the sequence is YPCAICEEDFNFKGVREQHYKQC. Composition is skewed to polar residues over residues 673–688 and 695–708; these read LQAA…SQKT and KLVT…VGSS. The disordered stretch occupies residues 673 to 708; it reads LQAAVNSMRSQNSQKTPTHRSSKLVTTPSHATVGSS. 4 consecutive C2H2-type zinc fingers follow at residues 713–736, 753–776, 794–815, and 826–849; these read FVCE…QTTH, LACS…VMSH, GRCK…VADH, and YSCD…TSNH. A disordered region spans residues 847-870; that stretch reads SNHPKGDKKTSTPAKKDDCITLDD. Residues 850–870 show a composition bias toward basic and acidic residues; sequence PKGDKKTSTPAKKDDCITLDD.

In terms of assembly, interacts with hda-1, let-418, lin-1, mog-1, mog-4, mog-5, mog-6, pie-1 and unc-98. Post-translationally, sumoylated. Expressed in somatic cells of embryos, the head, hypodermis and tail of larvae and the germline of adults, including oocytes but not mature sperm and spermatocytes.

It is found in the nucleus. In terms of biological role, has a broad role in development, specifically in the genetic pathway SynMuvB that negatively regulates specification of the vulval cell fate. Required for fem-3 3'-UTR-mediated repression in the regulation of the sperm/oocyte switch. Acts by regulating the translation of fem-3 mRNA, by binding to its 3'-UTR. This Caenorhabditis elegans protein is MOG interacting and ectopic P-granules protein 1.